The primary structure comprises 203 residues: Protein GrpE (203 aa).

Residues 1–38 (MTQDQTAEQMPAAESADQSADQGPAAESAAPPAVDSER) are disordered.

The protein belongs to the GrpE family. Homodimer.

It localises to the cytoplasm. Functionally, participates actively in the response to hyperosmotic and heat shock by preventing the aggregation of stress-denatured proteins, in association with DnaK and GrpE. It is the nucleotide exchange factor for DnaK and may function as a thermosensor. Unfolded proteins bind initially to DnaJ; upon interaction with the DnaJ-bound protein, DnaK hydrolyzes its bound ATP, resulting in the formation of a stable complex. GrpE releases ADP from DnaK; ATP binding to DnaK triggers the release of the substrate protein, thus completing the reaction cycle. Several rounds of ATP-dependent interactions between DnaJ, DnaK and GrpE are required for fully efficient folding. The chain is Protein GrpE from Paramagnetospirillum magneticum (strain ATCC 700264 / AMB-1) (Magnetospirillum magneticum).